Here is a 623-residue protein sequence, read N- to C-terminus: Endoglucanase 7 (623 aa).

Residues 1 to 79 lie on the Cytoplasmic side of the membrane; the sequence is MHPGNVWGGS…LGCVSVSRTV (79 aa). A helical; Signal-anchor for type II membrane protein membrane pass occupies residues 80–100; the sequence is FLWTVGSIAVLFLVVALPIII. At 101–623 the chain is on the extracellular side; it reads VKSLPRHKSA…TPPPPKAWKP (523 aa). N-linked (GlcNAc...) asparagine glycosylation is found at asparagine 116, asparagine 221, asparagine 328, asparagine 349, asparagine 412, asparagine 429, and asparagine 464. Histidine 517 is an active-site residue. Asparagine 548 carries N-linked (GlcNAc...) asparagine glycosylation. Aspartate 565 is an active-site residue. N-linked (GlcNAc...) asparagine glycosylation is present at asparagine 571. Residue glutamate 574 is part of the active site.

It belongs to the glycosyl hydrolase 9 (cellulase E) family. As to expression, expressed in basal region of leaf blade and proximal parts of leaf and floral organ.

The protein resides in the membrane. It carries out the reaction Endohydrolysis of (1-&gt;4)-beta-D-glucosidic linkages in cellulose, lichenin and cereal beta-D-glucans.. This Arabidopsis thaliana (Mouse-ear cress) protein is Endoglucanase 7 (KOR2).